Here is a 367-residue protein sequence, read N- to C-terminus: Peroxisome biogenesis protein 16 (367 aa).

The disordered stretch occupies residues Gly-135 to Asn-173. Positions Gln-147–Arg-159 are enriched in polar residues. 2 consecutive transmembrane segments (helical) span residues Ala-237 to Ile-257 and Ser-264 to Asn-284.

This sequence belongs to the peroxin-16 family. As to quaternary structure, interacts with APEM9 (via both N- and C-terminus). The detection of an additional immunorelated polypeptide of 52 kDa suggests a post-translational modification of PEX16. Expressed in roots, siliques, seeds, cotyledons, leaves and flowers. Low expression in leaves and roots.

It localises to the peroxisome membrane. The protein localises to the endoplasmic reticulum membrane. In terms of biological role, involved in the formation of peroxisomes, lipid bodies and protein bodies. This Arabidopsis thaliana (Mouse-ear cress) protein is Peroxisome biogenesis protein 16.